A 445-amino-acid chain; its full sequence is Tubulin beta-2B chain (445 aa).

Residues 1-4 (MREI) carry the MREI motif motif. A GTP-binding site is contributed by Q11. Residue S40 is modified to Phosphoserine. T55 is modified (phosphothreonine). At K58 the chain carries N6-acetyllysine; alternate. At K58 the chain carries N6-succinyllysine; alternate. A Glycyl lysine isopeptide (Lys-Gly) (interchain with G-Cter in ubiquitin); alternate cross-link involves residue K58. Positions 69, 138, 142, 143, and 144 each coordinate GTP. E69 contacts Mg(2+). S172 is modified (phosphoserine; by CDK1). Residues N204 and N226 each coordinate GTP. 2 positions are modified to phosphothreonine: T285 and T290. Residue R318 is modified to Omega-N-methylarginine. A Glycyl lysine isopeptide (Lys-Gly) (interchain with G-Cter in ubiquitin) cross-link involves residue K324. The interval 422 to 445 (YQQYQDATADEQGEFEEEEGEDEA) is disordered. Positions 429–445 (TADEQGEFEEEEGEDEA) are enriched in acidic residues. A 5-glutamyl polyglutamate modification is found at E438.

It belongs to the tubulin family. In terms of assembly, dimer of alpha and beta chains. A typical microtubule is a hollow water-filled tube with an outer diameter of 25 nm and an inner diameter of 15 nM. Alpha-beta heterodimers associate head-to-tail to form protofilaments running lengthwise along the microtubule wall with the beta-tubulin subunit facing the microtubule plus end conferring a structural polarity. Microtubules usually have 13 protofilaments but different protofilament numbers can be found in some organisms and specialized cells. It depends on Mg(2+) as a cofactor. In terms of processing, some glutamate residues at the C-terminus are polyglycylated, resulting in polyglycine chains on the gamma-carboxyl group. Glycylation is mainly limited to tubulin incorporated into axonemes (cilia and flagella) whereas glutamylation is prevalent in neuronal cells, centrioles, axonemes, and the mitotic spindle. Both modifications can coexist on the same protein on adjacent residues, and lowering polyglycylation levels increases polyglutamylation, and reciprocally. The precise function of polyglycylation is still unclear. Post-translationally, some glutamate residues at the C-terminus are polyglutamylated, resulting in polyglutamate chains on the gamma-carboxyl group. Polyglutamylation plays a key role in microtubule severing by spastin (SPAST). SPAST preferentially recognizes and acts on microtubules decorated with short polyglutamate tails: severing activity by SPAST increases as the number of glutamates per tubulin rises from one to eight, but decreases beyond this glutamylation threshold. Phosphorylated on Ser-172 by CDK1 during the cell cycle, from metaphase to telophase, but not in interphase. This phosphorylation inhibits tubulin incorporation into microtubules.

Its subcellular location is the cytoplasm. The protein localises to the cytoskeleton. Tubulin is the major constituent of microtubules, a cylinder consisting of laterally associated linear protofilaments composed of alpha- and beta-tubulin heterodimers. Microtubules grow by the addition of GTP-tubulin dimers to the microtubule end, where a stabilizing cap forms. Below the cap, tubulin dimers are in GDP-bound state, owing to GTPase activity of alpha-tubulin. Implicated in neuronal migration. This is Tubulin beta-2B chain (TUBB2B) from Bos taurus (Bovine).